A 171-amino-acid polypeptide reads, in one-letter code: Lipoprotein signal peptidase (171 aa).

2 helical membrane passes run 67 to 87 (YALL…LWRS) and 88 to 108 (TSKL…GNAY). Active-site residues include Asp-118 and Asp-136. The helical transmembrane segment at 127 to 147 (FSWYVFNLADAAIVAGVALLL) threads the bilayer.

It belongs to the peptidase A8 family.

It is found in the cell inner membrane. It carries out the reaction Release of signal peptides from bacterial membrane prolipoproteins. Hydrolyzes -Xaa-Yaa-Zaa-|-(S,diacylglyceryl)Cys-, in which Xaa is hydrophobic (preferably Leu), and Yaa (Ala or Ser) and Zaa (Gly or Ala) have small, neutral side chains.. Its pathway is protein modification; lipoprotein biosynthesis (signal peptide cleavage). This protein specifically catalyzes the removal of signal peptides from prolipoproteins. This chain is Lipoprotein signal peptidase, found in Methylocella silvestris (strain DSM 15510 / CIP 108128 / LMG 27833 / NCIMB 13906 / BL2).